A 433-amino-acid chain; its full sequence is 3-phosphoshikimate 1-carboxyvinyltransferase (433 aa).

The 3-phosphoshikimate site is built by lysine 22, serine 23, and arginine 27. Lysine 22 lines the phosphoenolpyruvate pocket. Phosphoenolpyruvate-binding residues include glycine 94 and arginine 123. The 3-phosphoshikimate site is built by serine 168, glutamine 170, aspartate 319, and lysine 346. Glutamine 170 serves as a coordination point for phosphoenolpyruvate. Aspartate 319 (proton acceptor) is an active-site residue. Positions 350 and 392 each coordinate phosphoenolpyruvate.

The protein belongs to the EPSP synthase family. In terms of assembly, monomer.

The protein localises to the cytoplasm. The catalysed reaction is 3-phosphoshikimate + phosphoenolpyruvate = 5-O-(1-carboxyvinyl)-3-phosphoshikimate + phosphate. Its pathway is metabolic intermediate biosynthesis; chorismate biosynthesis; chorismate from D-erythrose 4-phosphate and phosphoenolpyruvate: step 6/7. Catalyzes the transfer of the enolpyruvyl moiety of phosphoenolpyruvate (PEP) to the 5-hydroxyl of shikimate-3-phosphate (S3P) to produce enolpyruvyl shikimate-3-phosphate and inorganic phosphate. The chain is 3-phosphoshikimate 1-carboxyvinyltransferase from Roseiflexus sp. (strain RS-1).